The following is a 143-amino-acid chain: Large ribosomal subunit protein uL16c (143 aa).

Belongs to the universal ribosomal protein uL16 family. Part of the 50S ribosomal subunit.

The protein localises to the plastid. Its subcellular location is the chloroplast. The sequence is that of Large ribosomal subunit protein uL16c from Chlorokybus atmophyticus (Soil alga).